Here is a 192-residue protein sequence, read N- to C-terminus: Ion-translocating oxidoreductase complex subunit A (192 aa).

6 helical membrane-spanning segments follow: residues 5–25, 39–59, 65–85, 102–122, 134–154, and 171–191; these read LLLL…FLGL, IGMS…SYLV, LPFD…AVVV, ALGI…VALL, AIYG…FSAM, and AIAM…TGLV.

This sequence belongs to the NqrDE/RnfAE family. In terms of assembly, the complex is composed of six subunits: RnfA, RnfB, RnfC, RnfD, RnfE and RnfG.

The protein localises to the cell inner membrane. Functionally, part of a membrane-bound complex that couples electron transfer with translocation of ions across the membrane. The polypeptide is Ion-translocating oxidoreductase complex subunit A (Shewanella sp. (strain ANA-3)).